Consider the following 428-residue polypeptide: Flotillin-2a (428 aa).

3 S-palmitoyl cysteine lipidation sites follow: cysteine 4, cysteine 19, and cysteine 20.

Belongs to the band 7/mec-2 family. Flotillin subfamily. As to quaternary structure, heterooligomer; Heterooligomerizes with ic complex of flotillins 1 and 2. Post-translationally, palmitoylation may be required for the formation of higher order complexes and for neurite outgrowth in cultured neural stem cells.

The protein localises to the membrane. It localises to the endosome. May play a role in axon growth and regeneration. May be involved in epidermal cell adhesion and epidermal structure and function. This Danio rerio (Zebrafish) protein is Flotillin-2a (flot2a).